The following is a 91-amino-acid chain: UPF0223 protein SAR1071 (91 aa).

The protein belongs to the UPF0223 family.

The protein is UPF0223 protein SAR1071 of Staphylococcus aureus (strain MRSA252).